We begin with the raw amino-acid sequence, 335 residues long: Cathepsin B (335 aa).

Residues 1 to 17 (MWRLLATLSCLVLLTSA) form the signal peptide. A propeptide spans 18-79 (RESLHFQPLS…QRAAFAADMI (62 aa)) (activation peptide). 6 cysteine pairs are disulfide-bonded: Cys93-Cys122, Cys105-Cys150, Cys141-Cys207, Cys142-Cys146, Cys179-Cys211, and Cys187-Cys198. The active site involves Cys108. An N-linked (GlcNAc...) asparagine glycan is attached at Asn192. The residue at position 220 (Lys220) is an N6-acetyllysine. Cysteines 227 and 331 form a disulfide. Active-site residues include His278 and Asn298. Residues 333–335 (PHF) constitute a propeptide that is removed on maturation.

The protein belongs to the peptidase C1 family. Dimer of a heavy chain and a light chain cross-linked by a disulfide bond. Interacts with SRPX2. Directly interacts with SHKBP1. As to expression, expressed in heart (at protein level).

It is found in the lysosome. It localises to the melanosome. Its subcellular location is the secreted. The protein resides in the extracellular space. The protein localises to the apical cell membrane. It catalyses the reaction Hydrolysis of proteins with broad specificity for peptide bonds. Preferentially cleaves -Arg-Arg-|-Xaa bonds in small molecule substrates (thus differing from cathepsin L). In addition to being an endopeptidase, shows peptidyl-dipeptidase activity, liberating C-terminal dipeptides.. Functionally, thiol protease which is believed to participate in intracellular degradation and turnover of proteins. Cleaves matrix extracellular phosphoglycoprotein MEPE. Involved in the solubilization of cross-linked TG/thyroglobulin in the thyroid follicle lumen. Has also been implicated in tumor invasion and metastasis. The protein is Cathepsin B (CTSB) of Sus scrofa (Pig).